The following is a 156-amino-acid chain: Ribosomal RNA large subunit methyltransferase H (156 aa).

Residues leucine 73, glycine 104, and 123–128 contribute to the S-adenosyl-L-methionine site; that span reads LSALTL.

Belongs to the RNA methyltransferase RlmH family. As to quaternary structure, homodimer.

Its subcellular location is the cytoplasm. It carries out the reaction pseudouridine(1915) in 23S rRNA + S-adenosyl-L-methionine = N(3)-methylpseudouridine(1915) in 23S rRNA + S-adenosyl-L-homocysteine + H(+). Functionally, specifically methylates the pseudouridine at position 1915 (m3Psi1915) in 23S rRNA. This chain is Ribosomal RNA large subunit methyltransferase H, found in Shewanella woodyi (strain ATCC 51908 / MS32).